Consider the following 455-residue polypeptide: N(6)-adenosine-methyltransferase non-catalytic subunit METTL14 (455 aa).

Residues Gln-21–Glu-96 are disordered. The segment covering Ser-37–Cys-51 has biased composition (basic and acidic residues). A compositionally biased stretch (acidic residues) spans Glu-69–Glu-82. Interaction with METTL3 stretches follow at residues Arg-134 to Asp-135 and Ser-236 to Gly-237. The tract at residues Arg-244–Arg-253 is positively charged region required for RNA-binding. Interaction with METTL3 regions lie at residues Arg-254 to Asp-257 and Lys-277 to His-286. The interval Arg-296 to Arg-297 is positively charged region required for RNA-binding. An interaction with METTL3 region spans residues Asn-307 to Asp-311. The tract at residues Glu-392–Arg-455 is disordered. A compositionally biased stretch (gly residues) spans Arg-407–Ala-421. Positions Arg-423–Gly-441 are enriched in basic and acidic residues.

Belongs to the MT-A70-like family. In terms of assembly, heterodimer; heterodimerizes with mettl3 to form an antiparallel heterodimer that constitutes an active methyltransferase. Component of the WMM complex, a N6-methyltransferase complex composed of a catalytic subcomplex, named MAC, and of an associated subcomplex, named MACOM. The MAC subcomplex is composed of mettl3 and mettl14.

It localises to the nucleus. In terms of biological role, the METTL3-METTL14 heterodimer forms a N6-methyltransferase complex that methylates adenosine residues at the N(6) position of some mRNAs and regulates the circadian clock, differentiation of embryonic stem cells and cortical neurogenesis. In the heterodimer formed with mettl3, mettl14 constitutes the RNA-binding scaffold that recognizes the substrate rather than the catalytic core. N6-methyladenosine (m6A), which takes place at the 5'-[AG]GAC-3' consensus sites of some mRNAs, plays a role in mRNA stability and processing. The protein is N(6)-adenosine-methyltransferase non-catalytic subunit METTL14 (mettl14) of Danio rerio (Zebrafish).